Here is a 426-residue protein sequence, read N- to C-terminus: Proline--tRNA ligase (426 aa).

It belongs to the class-II aminoacyl-tRNA synthetase family. ProS type 2 subfamily. Homodimer.

It localises to the cytoplasm. The catalysed reaction is tRNA(Pro) + L-proline + ATP = L-prolyl-tRNA(Pro) + AMP + diphosphate. In terms of biological role, catalyzes the attachment of proline to tRNA(Pro) in a two-step reaction: proline is first activated by ATP to form Pro-AMP and then transferred to the acceptor end of tRNA(Pro). The sequence is that of Proline--tRNA ligase from Rickettsia peacockii (strain Rustic).